Consider the following 225-residue polypeptide: Protein-L-isoaspartate O-methyltransferase (225 aa).

Ser-75 is an active-site residue.

This sequence belongs to the methyltransferase superfamily. L-isoaspartyl/D-aspartyl protein methyltransferase family.

It is found in the cytoplasm. It carries out the reaction [protein]-L-isoaspartate + S-adenosyl-L-methionine = [protein]-L-isoaspartate alpha-methyl ester + S-adenosyl-L-homocysteine. Functionally, catalyzes the methyl esterification of L-isoaspartyl residues in peptides and proteins that result from spontaneous decomposition of normal L-aspartyl and L-asparaginyl residues. It plays a role in the repair and/or degradation of damaged proteins. The sequence is that of Protein-L-isoaspartate O-methyltransferase from Xanthomonas oryzae pv. oryzae (strain PXO99A).